Here is a 145-residue protein sequence, read N- to C-terminus: D-aminoacyl-tRNA deacylase (145 aa).

A Gly-cisPro motif, important for rejection of L-amino acids motif is present at residues 137 to 138; that stretch reads GP.

This sequence belongs to the DTD family. Homodimer.

It is found in the cytoplasm. The enzyme catalyses glycyl-tRNA(Ala) + H2O = tRNA(Ala) + glycine + H(+). It catalyses the reaction a D-aminoacyl-tRNA + H2O = a tRNA + a D-alpha-amino acid + H(+). Functionally, an aminoacyl-tRNA editing enzyme that deacylates mischarged D-aminoacyl-tRNAs. Also deacylates mischarged glycyl-tRNA(Ala), protecting cells against glycine mischarging by AlaRS. Acts via tRNA-based rather than protein-based catalysis; rejects L-amino acids rather than detecting D-amino acids in the active site. By recycling D-aminoacyl-tRNA to D-amino acids and free tRNA molecules, this enzyme counteracts the toxicity associated with the formation of D-aminoacyl-tRNA entities in vivo and helps enforce protein L-homochirality. The protein is D-aminoacyl-tRNA deacylase of Yersinia enterocolitica serotype O:8 / biotype 1B (strain NCTC 13174 / 8081).